The following is a 507-amino-acid chain: Ribosomal protein uS12 methylthiotransferase RimO (507 aa).

An MTTase N-terminal domain is found at 13–124 (RRVALLTLGC…ISDRLGAVLA (112 aa)). The [4Fe-4S] cluster site is built by Cys22, Cys58, Cys87, Cys205, Cys209, and Cys212. The 232-residue stretch at 191–422 (LDTGPVASLK…ALADELCAQR (232 aa)) folds into the Radical SAM core domain. A TRAM domain is found at 424–497 (EQRLGSTVQV…GVDLVAVPDA (74 aa)).

The protein belongs to the methylthiotransferase family. RimO subfamily. The cofactor is [4Fe-4S] cluster.

The protein resides in the cytoplasm. The enzyme catalyses L-aspartate(89)-[ribosomal protein uS12]-hydrogen + (sulfur carrier)-SH + AH2 + 2 S-adenosyl-L-methionine = 3-methylsulfanyl-L-aspartate(89)-[ribosomal protein uS12]-hydrogen + (sulfur carrier)-H + 5'-deoxyadenosine + L-methionine + A + S-adenosyl-L-homocysteine + 2 H(+). Functionally, catalyzes the methylthiolation of an aspartic acid residue of ribosomal protein uS12. The polypeptide is Ribosomal protein uS12 methylthiotransferase RimO (Salinispora tropica (strain ATCC BAA-916 / DSM 44818 / JCM 13857 / NBRC 105044 / CNB-440)).